The sequence spans 37 residues: MKVRASVKKMCPKCRVIRRHGKVMVICSNPKHKQRQG.

Belongs to the bacterial ribosomal protein bL36 family.

It localises to the plastid. It is found in the chloroplast. In Ostreococcus tauri, this protein is Large ribosomal subunit protein bL36c.